A 147-amino-acid polypeptide reads, in one-letter code: MTGKKSPNGLFAARKLRRKRLKFRWSEREFKIRMLGLKKKYDPLEGAPMARGIVLEKVGVEARQPNSAVRKCVRVQLIKNGRIVTAFVPGDGGLLVVDEHDEVLIEGIGGPRGRSMGDIPGVRYRVVTVNGVSLRAILEGRKQKPQR.

The protein belongs to the universal ribosomal protein uS12 family. Part of the 30S ribosomal subunit.

Functionally, with S4 and S5 plays an important role in translational accuracy. Located at the interface of the 30S and 50S subunits. The sequence is that of Small ribosomal subunit protein uS12 from Hyperthermus butylicus (strain DSM 5456 / JCM 9403 / PLM1-5).